A 587-amino-acid chain; its full sequence is Thioredoxin domain-containing protein 3 (587 aa).

The Thioredoxin domain occupies 2–119 (ASKKREVQLQ…VIALIDEEKK (118 aa)). Cysteine 39 and cysteine 42 are joined by a disulfide. NDK regions lie at residues 157–255 (MAVI…PLEE), 313–453 (VQRT…STLA), and 454–587 (LIKP…NFEN).

It in the C-terminal section; belongs to the NDK family. Monomer. In terms of tissue distribution, testis-specific.

It is found in the cytoplasm. Its function is as follows. Probably required during the final stages of sperm tail maturation in the testis and/or epididymis, where extensive disulfide bonding of fibrous sheath (FS) proteins occurs. In vitro, it has neither nucleoside diphosphate kinase (NDPK) activity nor reducing activity on disulfide bonds. Exhibits a 3'-5' exonuclease activity with a preference for single-stranded DNA, suggesting roles in DNA proofreading and repair. This chain is Thioredoxin domain-containing protein 3 (Nme8), found in Rattus norvegicus (Rat).